A 602-amino-acid polypeptide reads, in one-letter code: Exo-poly-alpha-D-galacturonosidase (602 aa).

The N-terminal stretch at 1–27 (MKVITFSRRSALASIVATCLMSTPALA) is a signal peptide. Residues 32–149 (APQKLQIPTL…TVTTTTTAVP (118 aa)) enclose the Fibronectin type-III domain. D395 functions as the Proton donor in the catalytic mechanism. H428 is an active-site residue.

The protein belongs to the glycosyl hydrolase 28 family.

It localises to the secreted. The catalysed reaction is [(1-&gt;4)-alpha-D-galacturonosyl](n) + H2O = alpha-D-galacturonosyl-(1-&gt;4)-D-galacturonate + [(1-&gt;4)-alpha-D-galacturonosyl](n-2). Contributes significantly to bacterial utilization of polygalacturonate and the induction of pectate lyase in the presence of extracellular pectic polymers. In Dickeya chrysanthemi (Pectobacterium chrysanthemi), this protein is Exo-poly-alpha-D-galacturonosidase (pehX).